Reading from the N-terminus, the 281-residue chain is Elongation factor Ts (281 aa).

An involved in Mg(2+) ion dislocation from EF-Tu region spans residues 80 to 83 (TDFV).

The protein belongs to the EF-Ts family.

The protein localises to the cytoplasm. In terms of biological role, associates with the EF-Tu.GDP complex and induces the exchange of GDP to GTP. It remains bound to the aminoacyl-tRNA.EF-Tu.GTP complex up to the GTP hydrolysis stage on the ribosome. This is Elongation factor Ts from Aliivibrio fischeri (strain MJ11) (Vibrio fischeri).